Here is a 336-residue protein sequence, read N- to C-terminus: Tyrosine phosphatase-like protein H1 (336 aa).

The Tyrosine-protein phosphatase domain maps to 27 to 295; it reads IKKEHHKLMK…EICYRVLCEA (269 aa).

Belongs to the protein-tyrosine phosphatase family.

The polypeptide is Tyrosine phosphatase-like protein H1 (H1) (Microplitis demolitor (Parasitoid wasp)).